Reading from the N-terminus, the 188-residue chain is Elongation factor P (188 aa).

Lys-34 bears the N6-(3,6-diaminohexanoyl)-5-hydroxylysine mark.

Belongs to the elongation factor P family. In terms of processing, may be beta-lysylated on the epsilon-amino group of Lys-34 by the combined action of EpmA and EpmB, and then hydroxylated on the C5 position of the same residue by EpmC (if this protein is present). Lysylation is critical for the stimulatory effect of EF-P on peptide-bond formation. The lysylation moiety may extend toward the peptidyltransferase center and stabilize the terminal 3-CCA end of the tRNA. Hydroxylation of the C5 position on Lys-34 may allow additional potential stabilizing hydrogen-bond interactions with the P-tRNA.

It is found in the cytoplasm. It functions in the pathway protein biosynthesis; polypeptide chain elongation. In terms of biological role, involved in peptide bond synthesis. Alleviates ribosome stalling that occurs when 3 or more consecutive Pro residues or the sequence PPG is present in a protein, possibly by augmenting the peptidyl transferase activity of the ribosome. Modification of Lys-34 is required for alleviation. The chain is Elongation factor P from Cronobacter sakazakii (strain ATCC BAA-894) (Enterobacter sakazakii).